Reading from the N-terminus, the 102-residue chain is uncharacterized protein (102 aa).

Residues threonine 27–phenylalanine 47 traverse the membrane as a helical segment.

It is found in the membrane. This is an uncharacterized protein from Saccharomyces cerevisiae (strain ATCC 204508 / S288c) (Baker's yeast).